A 444-amino-acid polypeptide reads, in one-letter code: uncharacterized protein (444 aa).

K268 is modified (N6-(pyridoxal phosphate)lysine).

Belongs to the class-III pyridoxal-phosphate-dependent aminotransferase family. Pyridoxal 5'-phosphate serves as cofactor.

This is an uncharacterized protein from Bacillus subtilis (strain 168).